Here is a 204-residue protein sequence, read N- to C-terminus: Signal peptidase I (204 aa).

At Met-1–Glu-10 the chain is on the cytoplasmic side. A helical membrane pass occupies residues Trp-11–Ser-30. Over Asn-31–Phe-204 the chain is Extracellular. Residues Ser-38 and Lys-76 contribute to the active site.

This sequence belongs to the peptidase S26 family.

Its subcellular location is the cell membrane. The enzyme catalyses Cleavage of hydrophobic, N-terminal signal or leader sequences from secreted and periplasmic proteins.. This chain is Signal peptidase I (lepB), found in Streptococcus pneumoniae (strain ATCC BAA-255 / R6).